The sequence spans 332 residues: MSRILDNEIMGDEELVERTLRPQYLREYIGQDKVKDQLQIFIEAAKMRDEALDHVLLFGPPGLGKTTMAFVIANELGVNLKQTSGPVIEKAGDLVAILNELEPGDVLFIDEIHRLPMSVEEVLYSAMEDFYIDIMIGAGEGSRSVHLELPPFTLIGATTRAGMLSNPLRARFGITGHMEYYAHADLTEIVERTADIFEMEITHEAASELALRSRGTPRIANRLLKRVRDFAQIVGNGVIDDVITDKALTMLDVDHEGLDYVDQKILRTMIEMYGGGPVGLGTLSVNIAEERETVEDMYEPYLIQKGFIMRTRSGRMATAKAYEHLGYEYNEK.

A large ATPase domain (RuvB-L) region spans residues 1–181; that stretch reads MSRILDNEIM…FGITGHMEYY (181 aa). ATP-binding positions include Leu-20, Arg-21, Gly-62, Lys-65, Thr-66, Thr-67, 128 to 130, Arg-171, Tyr-181, and Arg-218; that span reads EDF. Residue Thr-66 participates in Mg(2+) binding. Residues 182–252 form a small ATPAse domain (RuvB-S) region; it reads AHADLTEIVE…ITDKALTMLD (71 aa). The interval 255 to 332 is head domain (RuvB-H); the sequence is HEGLDYVDQK…EHLGYEYNEK (78 aa). Residues Arg-291, Arg-310, Arg-312, and Arg-315 each coordinate DNA.

Belongs to the RuvB family. As to quaternary structure, homohexamer. Forms an RuvA(8)-RuvB(12)-Holliday junction (HJ) complex. HJ DNA is sandwiched between 2 RuvA tetramers; dsDNA enters through RuvA and exits via RuvB. An RuvB hexamer assembles on each DNA strand where it exits the tetramer. Each RuvB hexamer is contacted by two RuvA subunits (via domain III) on 2 adjacent RuvB subunits; this complex drives branch migration. In the full resolvosome a probable DNA-RuvA(4)-RuvB(12)-RuvC(2) complex forms which resolves the HJ.

It localises to the cytoplasm. The catalysed reaction is ATP + H2O = ADP + phosphate + H(+). Functionally, the RuvA-RuvB-RuvC complex processes Holliday junction (HJ) DNA during genetic recombination and DNA repair, while the RuvA-RuvB complex plays an important role in the rescue of blocked DNA replication forks via replication fork reversal (RFR). RuvA specifically binds to HJ cruciform DNA, conferring on it an open structure. The RuvB hexamer acts as an ATP-dependent pump, pulling dsDNA into and through the RuvAB complex. RuvB forms 2 homohexamers on either side of HJ DNA bound by 1 or 2 RuvA tetramers; 4 subunits per hexamer contact DNA at a time. Coordinated motions by a converter formed by DNA-disengaged RuvB subunits stimulates ATP hydrolysis and nucleotide exchange. Immobilization of the converter enables RuvB to convert the ATP-contained energy into a lever motion, pulling 2 nucleotides of DNA out of the RuvA tetramer per ATP hydrolyzed, thus driving DNA branch migration. The RuvB motors rotate together with the DNA substrate, which together with the progressing nucleotide cycle form the mechanistic basis for DNA recombination by continuous HJ branch migration. Branch migration allows RuvC to scan DNA until it finds its consensus sequence, where it cleaves and resolves cruciform DNA. The sequence is that of Holliday junction branch migration complex subunit RuvB from Streptococcus pneumoniae (strain CGSP14).